The following is a 155-amino-acid chain: Putative pre-16S rRNA nuclease (155 aa).

The segment at 136 to 155 is disordered; it reads DAERATSRPPGHPVEPRIGP.

It belongs to the YqgF nuclease family.

It localises to the cytoplasm. Its function is as follows. Could be a nuclease involved in processing of the 5'-end of pre-16S rRNA. The polypeptide is Putative pre-16S rRNA nuclease (Leifsonia xyli subsp. xyli (strain CTCB07)).